Consider the following 675-residue polypeptide: Pesticidal crystal protein Cry25Aa (675 aa).

Belongs to the delta endotoxin family.

Functionally, promotes colloidosmotic lysis by binding to the midgut epithelial cells of insects. The protein is Pesticidal crystal protein Cry25Aa (cry25Aa) of Bacillus thuringiensis subsp. jegathesan.